We begin with the raw amino-acid sequence, 387 residues long: Queuine tRNA-ribosyltransferase (387 aa).

The active-site Proton acceptor is D102. Residues 102 to 106 (DSGGF), D156, Q205, and G232 contribute to the substrate site. The RNA binding stretch occupies residues 263–269 (GVGTPED). D282 serves as the catalytic Nucleophile. The segment at 287–291 (TRNAR) is RNA binding; important for wobble base 34 recognition. 4 residues coordinate Zn(2+): C320, C322, C325, and H351.

It belongs to the queuine tRNA-ribosyltransferase family. As to quaternary structure, homodimer. Within each dimer, one monomer is responsible for RNA recognition and catalysis, while the other monomer binds to the replacement base PreQ1. Zn(2+) is required as a cofactor.

It catalyses the reaction 7-aminomethyl-7-carbaguanine + guanosine(34) in tRNA = 7-aminomethyl-7-carbaguanosine(34) in tRNA + guanine. Its pathway is tRNA modification; tRNA-queuosine biosynthesis. Its function is as follows. Catalyzes the base-exchange of a guanine (G) residue with the queuine precursor 7-aminomethyl-7-deazaguanine (PreQ1) at position 34 (anticodon wobble position) in tRNAs with GU(N) anticodons (tRNA-Asp, -Asn, -His and -Tyr). Catalysis occurs through a double-displacement mechanism. The nucleophile active site attacks the C1' of nucleotide 34 to detach the guanine base from the RNA, forming a covalent enzyme-RNA intermediate. The proton acceptor active site deprotonates the incoming PreQ1, allowing a nucleophilic attack on the C1' of the ribose to form the product. After dissociation, two additional enzymatic reactions on the tRNA convert PreQ1 to queuine (Q), resulting in the hypermodified nucleoside queuosine (7-(((4,5-cis-dihydroxy-2-cyclopenten-1-yl)amino)methyl)-7-deazaguanosine). The sequence is that of Queuine tRNA-ribosyltransferase from Polaromonas naphthalenivorans (strain CJ2).